The sequence spans 95 residues: Small ribosomal subunit protein uS17 (95 aa).

It belongs to the universal ribosomal protein uS17 family. Part of the 30S ribosomal subunit.

In terms of biological role, one of the primary rRNA binding proteins, it binds specifically to the 5'-end of 16S ribosomal RNA. The sequence is that of Small ribosomal subunit protein uS17 from Phytoplasma australiense.